The sequence spans 526 residues: Aspartate ammonia-lyase (526 aa).

A disordered region spans residues 1–44 (MSKTSNKSSADSKNDAKAEDIVNGENQIATNESQSSDSAAVSER). Positions 10 to 20 (ADSKNDAKAED) are enriched in basic and acidic residues. Polar residues predominate over residues 24–39 (GENQIATNESQSSDSA). T155, S194, T195, N196, and T241 together coordinate L-aspartate. The SS loop stretch occupies residues 371-380 (GSSIMPAKVN). Catalysis depends on S372, which acts as the Proton acceptor. L-aspartate-binding residues include S373 and K378.

It belongs to the class-II fumarase/aspartase family. Aspartase subfamily. Homotetramer.

The enzyme catalyses L-aspartate = fumarate + NH4(+). In terms of biological role, catalyzes the reversible conversion of L-aspartate to fumarate and ammonia. In Corynebacterium glutamicum (strain ATCC 13032 / DSM 20300 / JCM 1318 / BCRC 11384 / CCUG 27702 / LMG 3730 / NBRC 12168 / NCIMB 10025 / NRRL B-2784 / 534), this protein is Aspartate ammonia-lyase.